The following is a 1000-amino-acid chain: Lysine-specific histone demethylase 1 (1000 aa).

The segment at 104-123 (RRPAGRRGRPALNTSNSLER) is disordered. Residues 107–137 (AGRRGRPALNTSNSLERNGTRYVSAEAPISV) are a coiled coil. The SWIRM domain occupies 153-249 (CYESAIASNL…YGCIYIISSL (97 aa)). FAD-binding positions include 260–302 (VAII…IYEA), Glu301, and 328–329 (LA). The segment at 279-950 (LFAQYEQDFL…RCESQPIPED (672 aa)) is demethylase activity. Positions 434-529 (IGWYISIEAF…ADMLNSLAST (96 aa)) form a coiled coil. A disordered region spans residues 780 to 800 (TYGTKRNAQQALGKEGERENK). Residues 841-921 (SRPSANPYLL…NYSTRLEEYQ (81 aa)) constitute a DNA-binding region (HMG box). 908 to 909 (AR) is an FAD binding site. A compositionally biased stretch (basic and acidic residues) spans 959–972 (EQEDEHLHPEKEGM). The disordered stretch occupies residues 959–1000 (EQEDEHLHPEKEGMSVENSDDDYHDDLDYEDSISEVFPDNFS). The span at 976–991 (NSDDDYHDDLDYEDSI) shows a compositional bias: acidic residues.

This sequence belongs to the flavin monoamine oxidase family. Component of the SWM histone demethylase complex composed of at least lsd1, lsd2, phf1 and phf2. Interacts directly with lsd2. Requires FAD as cofactor.

The protein localises to the nucleus. Its function is as follows. Catalytic component of the SWM histone demethylase complex that specifically demethylates H3K9me2, a specific tag for epigenetic transcriptional activation, thereby acting as a corepressor. Acts by oxidizing the substrate by FAD to generate the corresponding imine that is subsequently hydrolyzed. Has a role in regulating heterochromatin propagation and euchromatic transcription. Also has a gene activating role. The polypeptide is Lysine-specific histone demethylase 1 (lsd1) (Schizosaccharomyces pombe (strain 972 / ATCC 24843) (Fission yeast)).